Consider the following 97-residue polypeptide: Ataxin-7-like protein 3B (97 aa).

The interval 76–97 (SLPGDPGDGPQTELQRSPPEFQ) is disordered. Residue S92 is modified to Phosphoserine.

The protein belongs to the SGF11 family. Interacts strongly with ENY2. Interacts weakly with USP22.

The protein localises to the cytoplasm. Its function is as follows. By binding to ENY2, interferes with the nuclear functions of the deubiquitinase (DUB) module of the SAGA complex which consists of ENY2, ATXN7, ATXN7L3 and the histone deubiquitinating component USP22. Affects USP22 DUB activity toward histones indirectly by changing the subcellular distribution of ENY2 and altering ENY2 availability for ATXN7L3 interaction. Regulates H2B monoubiquitination (H2Bub1) levels through cytoplasmic sequestration of ENY2 resulting in loss of nuclear ENY2-ATXN7L3 association which destabilizes ATXN7L3. Affects protein expression levels of ENY2 and ATXN7L3. In Mus musculus (Mouse), this protein is Ataxin-7-like protein 3B (Atxn7l3b).